Here is a 611-residue protein sequence, read N- to C-terminus: Zinc metalloproteinase nas-31 (611 aa).

The first 17 residues, 1-17 (MILQLLFYSLFTHLAVS), serve as a signal peptide directing secretion. A propeptide spanning residues 18 to 158 (QIDVNQALNQ…TVSTASRARR (141 aa)) is cleaved from the precursor. Asparagine 53 and asparagine 67 each carry an N-linked (GlcNAc...) asparagine glycan. Residues 82–95 (NAGTNQENGATEQQ) show a composition bias toward polar residues. The tract at residues 82-103 (NAGTNQENGATEQQKPLREKPR) is disordered. In terms of domain architecture, Peptidase M12A spans 159 to 354 (QAYRDRYYPS…SMMNEHYKCK (196 aa)). Residue asparagine 200 is glycosylated (N-linked (GlcNAc...) asparagine). 9 disulfides stabilise this stretch: cysteine 203–cysteine 353, cysteine 224–cysteine 243, cysteine 357–cysteine 376, cysteine 379–cysteine 390, cysteine 397–cysteine 428, cysteine 455–cysteine 476, cysteine 532–cysteine 564, cysteine 539–cysteine 557, and cysteine 548–cysteine 561. Histidine 251 serves as a coordination point for Zn(2+). Glutamate 252 is an active-site residue. Positions 255 and 261 each coordinate Zn(2+). One can recognise an EGF-like domain in the interval 340 to 396 (GFYDISMMNEHYKCKELCPAASSAQCKNGGFPSPRNCAICICPSGYGGILCDQRPPG). Residues 397 to 516 (CGDSVTATTT…LEYRAVTPSV (120 aa)) form the CUB domain. A glycan (N-linked (GlcNAc...) asparagine) is linked at asparagine 424. The ShKT domain maps to 532–564 (CQDLHPNCDFYKFFGMCRSKKIRSNCKFTCHDC).

Zn(2+) is required as a cofactor. Expressed in excretory cell and in amphid and phasmid sheath glia.

The protein localises to the secreted. Its function is as follows. Metalloprotease. This Caenorhabditis elegans protein is Zinc metalloproteinase nas-31 (nas-31).